We begin with the raw amino-acid sequence, 1126 residues long: Replication protein 1a (1126 aa).

The interval 69–406 is methyltransferase; it reads SFSLDATQQN…HTIIGGVTLI (338 aa). The 189-residue stretch at 90–278 folds into the Alphavirus-like MT domain; that stretch reads VFSNSSSSSH…HRFSLLKHYL (189 aa). The (+)RNA virus helicase ATP-binding domain occupies 806 to 963; sequence DQSCVFASAE…HKLTGKVERK (158 aa). The segment at 834-1094 is ATP-dependent helicase; sequence TIVDGVAGCG…RHKKTFKYFT (261 aa). 838-845 is a binding site for ATP; the sequence is GVAGCGKT. The region spanning 964 to 1125 is the (+)RNA virus helicase C-terminal domain; sequence LITWRSPADA…SILARSYNHN (162 aa).

Belongs to the bromoviridae replication protein 1a family. Interacts with RNA-directed RNA polymerase 2a.

The protein resides in the host endoplasmic reticulum membrane. Its function is as follows. Involved in the virus replication. Contains a helicase domain and a methyltransferase domain. The methyltransferase domain is probably involved in viral RNA capping. Involved in the formation of ER membrane spherular invaginations in which RNA replication complexes form. In Alfalfa mosaic virus (AMV), this protein is Replication protein 1a.